The following is a 251-amino-acid chain: MTLLLEEKYPIENCEPWDFCGFSYKVNFYNREDLTGIVVALDLTDHVLEKAIEEKANLIITHHPFIYNNNLEEEFANFPYKEKIYNKLVKLKISVYSLHTNFDADKQGTSYWVAKEFFPDEKPSPLGKYGALIKTKIELSELKAILRKKYSGPIMTNNKKASFSFNGVAFFAGSGDSPEINEHTTKNNIIITSDTKWSDWIFLSQNKKTLVNISHQTEELFIKVIYFLLTKKFKKGVNVSTFYYKNLINSL.

5 residues coordinate a divalent metal cation: His-62, His-63, Asp-103, His-215, and Glu-219.

It belongs to the GTP cyclohydrolase I type 2/NIF3 family. Homohexamer.

The polypeptide is GTP cyclohydrolase 1 type 2 homolog (Mycoplasmopsis pulmonis (strain UAB CTIP) (Mycoplasma pulmonis)).